Reading from the N-terminus, the 348-residue chain is Sorbitol dehydrogenase (348 aa).

The Zn(2+) site is built by Cys40, His65, and Glu66. Residues Ile179, Asp199, Arg204, 269–271 (VGI), and 293–295 (SFR) each bind NAD(+). Arg295 contacts substrate.

It belongs to the zinc-containing alcohol dehydrogenase family. In terms of assembly, homotetramer. The cofactor is Zn(2+).

It catalyses the reaction xylitol + NAD(+) = D-xylulose + NADH + H(+). The enzyme catalyses L-iditol + NAD(+) = keto-L-sorbose + NADH + H(+). It carries out the reaction keto-D-fructose + NADH + H(+) = D-sorbitol + NAD(+). Polyol dehydrogenase that catalyzes the reversible NAD(+)-dependent oxidation of various sugar alcohols. Is active with xylitol, L-iditol and D-sorbitol (D-glucitol) as substrates, leading to the C2-oxidized products D-xylulose, L-sorbose and D-fructose, respectively. Is a key enzyme in the polyol pathway that interconverts glucose and fructose via sorbitol, which constitutes an important alternate route for glucose metabolism. The polypeptide is Sorbitol dehydrogenase (SDH) (Bombyx mori (Silk moth)).